We begin with the raw amino-acid sequence, 403 residues long: MSPLLRVLNRTSLVTQIVIGLIAGIALALLAPAIALDLGFLGKVFVSALKAVAPVLVFILVMASIANHRHGQETHIRPILWLYLLGTFSAAVVAVVASMLFPSQLALSAGDVTLSAPGGIGEVLQNLVLSAVDNPINALLNANFIGVLTWAIGLGVALRHAGETTRTVVEDLSNGVTLIVRVVIRFAPLGIFGLVSSTLAQSGLDALLGYLHLLAVLIGCMLFVALVMNPLIVFWKIRRNPYPLTLLCLRESGITAFFTRSSAANIPVNLALSERLGLHEDTYSVSIPLGATINMAGAAITITVLTLAAVHTLGIPVDLPTAVLLSMVAAVCACGASGVAGGSLLLIPLACSLFGIPSEIAMQVVAVGFIIGVLQDSAETALNSSTDVLFTAAACQAQERRSA.

9 helical membrane-spanning segments follow: residues glutamine 16 to leucine 36, phenylalanine 45 to isoleucine 65, isoleucine 79 to methionine 99, alanine 138 to leucine 158, glycine 175 to valine 195, leucine 214 to phenylalanine 234, methionine 295 to isoleucine 315, methionine 327 to isoleucine 347, and leucine 353 to valine 373.

This sequence belongs to the dicarboxylate/amino acid:cation symporter (DAACS) (TC 2.A.23) family.

It localises to the cell inner membrane. The enzyme catalyses L-serine(in) + Na(+)(in) = L-serine(out) + Na(+)(out). It catalyses the reaction L-threonine(in) + Na(+)(in) = L-threonine(out) + Na(+)(out). Its function is as follows. Involved in the import of serine and threonine into the cell, with the concomitant import of sodium (symport system). The chain is Serine/threonine transporter SstT from Pseudomonas putida (strain W619).